The following is a 264-amino-acid chain: Tryptophan synthase alpha chain (264 aa).

Catalysis depends on proton acceptor residues Glu49 and Asp60.

It belongs to the TrpA family. As to quaternary structure, tetramer of two alpha and two beta chains.

It carries out the reaction (1S,2R)-1-C-(indol-3-yl)glycerol 3-phosphate + L-serine = D-glyceraldehyde 3-phosphate + L-tryptophan + H2O. Its pathway is amino-acid biosynthesis; L-tryptophan biosynthesis; L-tryptophan from chorismate: step 5/5. In terms of biological role, the alpha subunit is responsible for the aldol cleavage of indoleglycerol phosphate to indole and glyceraldehyde 3-phosphate. The protein is Tryptophan synthase alpha chain of Microcystis aeruginosa (strain NIES-843 / IAM M-2473).